The chain runs to 160 residues: D-aminoacyl-tRNA deacylase (160 aa).

The short motif at 146–147 (GP) is the Gly-cisPro motif, important for rejection of L-amino acids element.

It belongs to the DTD family. Homodimer.

It localises to the cytoplasm. It carries out the reaction glycyl-tRNA(Ala) + H2O = tRNA(Ala) + glycine + H(+). The enzyme catalyses a D-aminoacyl-tRNA + H2O = a tRNA + a D-alpha-amino acid + H(+). An aminoacyl-tRNA editing enzyme that deacylates mischarged D-aminoacyl-tRNAs. Also deacylates mischarged glycyl-tRNA(Ala), protecting cells against glycine mischarging by AlaRS. Acts via tRNA-based rather than protein-based catalysis; rejects L-amino acids rather than detecting D-amino acids in the active site. By recycling D-aminoacyl-tRNA to D-amino acids and free tRNA molecules, this enzyme counteracts the toxicity associated with the formation of D-aminoacyl-tRNA entities in vivo and helps enforce protein L-homochirality. This is D-aminoacyl-tRNA deacylase from Desulfovibrio desulfuricans (strain ATCC 27774 / DSM 6949 / MB).